A 395-amino-acid chain; its full sequence is S-adenosylmethionine synthase (395 aa).

Histidine 18 is an ATP binding site. Mg(2+) is bound at residue aspartate 20. A K(+)-binding site is contributed by glutamate 46. The L-methionine site is built by glutamate 59 and glutamine 103. A flexible loop region spans residues 103 to 113; it reads QSADIAVGVDS. Residues 170–172, aspartate 244, 250–251, alanine 267, and lysine 271 contribute to the ATP site; these read DAK and RK. Aspartate 244 lines the L-methionine pocket. Lysine 275 provides a ligand contact to L-methionine.

It belongs to the AdoMet synthase family. Homotetramer; dimer of dimers. The cofactor is Mg(2+). It depends on K(+) as a cofactor.

The protein localises to the cytoplasm. The enzyme catalyses L-methionine + ATP + H2O = S-adenosyl-L-methionine + phosphate + diphosphate. Its pathway is amino-acid biosynthesis; S-adenosyl-L-methionine biosynthesis; S-adenosyl-L-methionine from L-methionine: step 1/1. In terms of biological role, catalyzes the formation of S-adenosylmethionine (AdoMet) from methionine and ATP. The overall synthetic reaction is composed of two sequential steps, AdoMet formation and the subsequent tripolyphosphate hydrolysis which occurs prior to release of AdoMet from the enzyme. The polypeptide is S-adenosylmethionine synthase (Gluconacetobacter diazotrophicus (strain ATCC 49037 / DSM 5601 / CCUG 37298 / CIP 103539 / LMG 7603 / PAl5)).